The chain runs to 428 residues: Dihydroorotase (428 aa).

The Zn(2+) site is built by H59 and H61. Residues 61–63 and N93 each bind substrate; that span reads HLR. Zn(2+) is bound by residues D151, H178, and H231. N277 contributes to the substrate binding site. Residue D304 participates in Zn(2+) binding. D304 is a catalytic residue. Substrate is bound by residues H308 and 322–323; that span reads FG.

Belongs to the metallo-dependent hydrolases superfamily. DHOase family. Class I DHOase subfamily. It depends on Zn(2+) as a cofactor.

It carries out the reaction (S)-dihydroorotate + H2O = N-carbamoyl-L-aspartate + H(+). Its pathway is pyrimidine metabolism; UMP biosynthesis via de novo pathway; (S)-dihydroorotate from bicarbonate: step 3/3. Functionally, catalyzes the reversible cyclization of carbamoyl aspartate to dihydroorotate. The polypeptide is Dihydroorotase (Bacillus cytotoxicus (strain DSM 22905 / CIP 110041 / 391-98 / NVH 391-98)).